The primary structure comprises 299 residues: Meso-diaminopimelate D-dehydrogenase (299 aa).

NADP(+)-binding positions include 11–14, arginine 36, 67–70, 90–92, and 119–123; these read YGNI, CTPT, SFD, and AGWDP. Residues aspartate 92, aspartate 122, phenylalanine 146, 152-153, threonine 171, arginine 181, histidine 227, and asparagine 253 each bind substrate; that span reads MG.

The protein belongs to the diaminopimelate dehydrogenase family. In terms of assembly, homodimer.

The catalysed reaction is meso-2,6-diaminopimelate + NADP(+) + H2O = (S)-2-amino-6-oxoheptanedioate + NH4(+) + NADPH + H(+). It functions in the pathway amino-acid biosynthesis; L-lysine biosynthesis via DAP pathway; DL-2,6-diaminopimelate from (S)-tetrahydrodipicolinate: step 1/1. Its function is as follows. Catalyzes the reversible NADPH-dependent reductive amination of L-2-amino-6-oxopimelate, the acyclic form of L-tetrahydrodipicolinate, to generate the meso compound, D,L-2,6-diaminopimelate. Probably plays a role in lysine biosynthesis. Exhibits a high substrate specificity for meso-2,6-diaminopimelate (m-DAP), since the activity with L,L-2,6-diaminopimelate is less than 5% of the activity observed with m-DAP. Can use NAD(+) only very poorly since the activity observed in the presence of NAD(+) is about 14% of that with NADP(+). This is Meso-diaminopimelate D-dehydrogenase (ddh) from Bacteroides fragilis (strain ATCC 25285 / DSM 2151 / CCUG 4856 / JCM 11019 / LMG 10263 / NCTC 9343 / Onslow / VPI 2553 / EN-2).